The chain runs to 544 residues: Chaperonin GroEL 1 (544 aa).

ATP-binding positions include 29 to 32, 86 to 90, Gly413, and Asp495; these read TLGP and DGTTT.

The protein belongs to the chaperonin (HSP60) family. In terms of assembly, forms a cylinder of 14 subunits composed of two heptameric rings stacked back-to-back. Interacts with the co-chaperonin GroES.

The protein localises to the cytoplasm. The catalysed reaction is ATP + H2O + a folded polypeptide = ADP + phosphate + an unfolded polypeptide.. Its function is as follows. Together with its co-chaperonin GroES, plays an essential role in assisting protein folding. The GroEL-GroES system forms a nano-cage that allows encapsulation of the non-native substrate proteins and provides a physical environment optimized to promote and accelerate protein folding. The protein is Chaperonin GroEL 1 of Synechococcus sp. (strain ATCC 27144 / PCC 6301 / SAUG 1402/1) (Anacystis nidulans).